The sequence spans 212 residues: Tetraspanin-31-A (212 aa).

At 1–12 (MVCGGFTCSKNA) the chain is on the cytoplasmic side. Residues 13 to 33 (LCALNVVYMLVGLLLIGVAAW) traverse the membrane as a helical segment. The Extracellular portion of the chain corresponds to 34 to 44 (GKGFGIVSSIH). The chain crosses the membrane as a helical span at residues 45–65 (IIGGVIAIGVFLLLIAIIGLI). Over 66–72 (GAVSHHQ) the chain is Cytoplasmic. Residues 73 to 93 (VMLFIYMVVLILVFIFQFIVS) traverse the membrane as a helical segment. At 94–175 (CSCLAMNRSQ…MLNHADEALK (82 aa)) the chain is on the extracellular side. 4 N-linked (GlcNAc...) asparagine glycosylation sites follow: Asn-100, Asn-109, Asn-117, and Asn-134. Residues 176-196 (ILGGVGLFFSFTEILGVWLAF) form a helical membrane-spanning segment. Residues 197–212 (RFRNQKDPRANPSAFL) are Cytoplasmic-facing.

It belongs to the tetraspanin (TM4SF) family.

The protein localises to the membrane. The protein is Tetraspanin-31-A (tspan31-a) of Xenopus laevis (African clawed frog).